Consider the following 442-residue polypeptide: Syndecan-3 (442 aa).

Disordered regions lie at residues 1–25 and 55–85; these read MKPGPPRRGTAQGQRVDTATHGPGA and RPVDLEGSGDDDSFPDDELDDLYSGSGSGYF. Residues 1-44 form the signal peptide; the sequence is MKPGPPRRGTAQGQRVDTATHGPGARGLLLPPLLLLLLAGRAAG. Over 45–387 the chain is Extracellular; that stretch reads AQRWRNENFE…SILERKEVLV (343 aa). The segment covering 61 to 75 has biased composition (acidic residues); sequence GSGDDDSFPDDELDD. O-linked (Xyl...) (glycosaminoglycan) serine glycans are attached at residues Ser78, Ser80, Ser82, and Ser89. A glycan (O-linked (GalNAc) threonine; by GALNT13) is linked at Thr107. Disordered stretches follow at residues 151-175, 180-199, 225-244, 252-327, and 339-372; these read EEPSQRATTISTTTSTTAATTTGAP, APATAATTAPSTPAAPPATA, ATTPAVPSPPTTVTTLDTEA, TATS…TTQP, and AAAKPSPPLGTLPKGARPGLGLHDNAIDSGSSAA. Residues 157–175 are compositionally biased toward low complexity; it reads ATTISTTTSTTAATTTGAP. Ser161 carries O-linked (GalNAc) serine; by GALNT13 glycosylation. Residues Thr162, Thr163, Thr170, and Thr172 are each glycosylated (O-linked (GalNAc) threonine; by GALNT13). Positions 276 to 287 are enriched in low complexity; the sequence is TLPLGTTAPGPT. Residues 289–303 show a composition bias toward polar residues; it reads VAQTPTPESLLTTTQ. 2 O-linked (Xyl...) (glycosaminoglycan) serine glycosylation sites follow: Ser315 and Ser367. The chain crosses the membrane as a helical span at residues 388-408; the sequence is AVIVGGVVGALFAAFLVTLLI. Phosphotyrosine occurs at positions 409, 419, 431, and 441. At 409-442 the chain is on the cytoplasmic side; the sequence is YRMKKKDEGSYTLEEPKQASVTYQKPDKQEEFYA. Residues 419 to 442 form a disordered region; the sequence is YTLEEPKQASVTYQKPDKQEEFYA. The span at 433-442 shows a compositional bias: basic and acidic residues; that stretch reads KPDKQEEFYA.

Belongs to the syndecan proteoglycan family. As to quaternary structure, interacts with TIAM1. Interacts (via heparan sulfate chains) with PTN; this interaction mediates the neurite outgrowth-promoting signal from PTN to the cytoskeleton of growing neurites; this interaction mediates osteoblast recruitment. Interacts with MDK; this interaction induces SDC3 clustering; this interaction induces neuronal cell adhesion and neurite outgrowth. Post-translationally, O-glycosylated within the Thr/Ser-rich region which could interact with lectin domains on other molecules. As to expression, high levels in neonatal brain, heart, and Schwann cells, barely detectable in neonatal or adult liver, or adult brain.

The protein resides in the cell membrane. In terms of biological role, cell surface proteoglycan that may bear heparan sulfate. May have a role in the organization of cell shape by affecting the actin cytoskeleton, possibly by transferring signals from the cell surface in a sugar-dependent mechanism. This Rattus norvegicus (Rat) protein is Syndecan-3 (Sdc3).